The following is a 335-amino-acid chain: Probable BOI-related E3 ubiquitin-protein ligase 3 (335 aa).

Residues 196 to 232 (LEEKVKSLCVENQIWRDVAQSNEATVNALRSNLQQVL) form a WRD domain region. The segment at 287–322 (CRSCGKGEASVLLLPCRHMCLCSVCGSSLNTCPICK) adopts an RING-type zinc-finger fold.

In terms of assembly, interacts with the DELLA proteins GAI, RGA, RGL1, RGL2 and RGL3.

The catalysed reaction is S-ubiquitinyl-[E2 ubiquitin-conjugating enzyme]-L-cysteine + [acceptor protein]-L-lysine = [E2 ubiquitin-conjugating enzyme]-L-cysteine + N(6)-ubiquitinyl-[acceptor protein]-L-lysine.. The protein operates within protein degradation; proteasomal ubiquitin-dependent pathway. Its function is as follows. Probable E3 ubiquitin-protein ligase. Has no effect on the stability of the DELLA proteins. The protein is Probable BOI-related E3 ubiquitin-protein ligase 3 (BRG3) of Arabidopsis thaliana (Mouse-ear cress).